Here is a 546-residue protein sequence, read N- to C-terminus: CTP synthase (546 aa).

Residues 1–265 are amidoligase domain; it reads MTKYVFVTGG…DEIVCHKLGI (265 aa). Ser13 serves as a coordination point for CTP. UTP is bound at residue Ser13. Residues 14–19 and Asp71 contribute to the ATP site; that span reads SLGKGI. Asp71 and Glu139 together coordinate Mg(2+). Residues 146-148, 186-191, and Lys222 each bind CTP; these read DIE and KTKPTQ. Residues 186–191 and Lys222 contribute to the UTP site; that span reads KTKPTQ. Residues 290-543 enclose the Glutamine amidotransferase type-1 domain; that stretch reads DIAFVGKYVD…VKAAIARHSA (254 aa). Gly351 contacts L-glutamine. Catalysis depends on Cys378, which acts as the Nucleophile; for glutamine hydrolysis. Residues 379-382, Glu402, and Arg469 contribute to the L-glutamine site; that span reads LGMQ. Active-site residues include His516 and Glu518.

Belongs to the CTP synthase family. In terms of assembly, homotetramer.

The catalysed reaction is UTP + L-glutamine + ATP + H2O = CTP + L-glutamate + ADP + phosphate + 2 H(+). It catalyses the reaction L-glutamine + H2O = L-glutamate + NH4(+). It carries out the reaction UTP + NH4(+) + ATP = CTP + ADP + phosphate + 2 H(+). It functions in the pathway pyrimidine metabolism; CTP biosynthesis via de novo pathway; CTP from UDP: step 2/2. With respect to regulation, allosterically activated by GTP, when glutamine is the substrate; GTP has no effect on the reaction when ammonia is the substrate. The allosteric effector GTP functions by stabilizing the protein conformation that binds the tetrahedral intermediate(s) formed during glutamine hydrolysis. Inhibited by the product CTP, via allosteric rather than competitive inhibition. In terms of biological role, catalyzes the ATP-dependent amination of UTP to CTP with either L-glutamine or ammonia as the source of nitrogen. Regulates intracellular CTP levels through interactions with the four ribonucleotide triphosphates. This chain is CTP synthase, found in Azoarcus sp. (strain BH72).